Consider the following 138-residue polypeptide: DNA-directed RNA polymerase subunit omega (138 aa).

Residues 104–138 (GNSDGLENSSNSRDDNPLGRDNFFSTPENRNNTNS) are disordered. Positions 126 to 138 (FFSTPENRNNTNS) are enriched in polar residues.

It belongs to the RNA polymerase subunit omega family. In terms of assembly, the RNAP catalytic core consists of 2 alpha, 1 beta, 1 beta' and 1 omega subunit. When a sigma factor is associated with the core the holoenzyme is formed, which can initiate transcription.

It catalyses the reaction RNA(n) + a ribonucleoside 5'-triphosphate = RNA(n+1) + diphosphate. Functionally, promotes RNA polymerase assembly. Latches the N- and C-terminal regions of the beta' subunit thereby facilitating its interaction with the beta and alpha subunits. In Ehrlichia chaffeensis (strain ATCC CRL-10679 / Arkansas), this protein is DNA-directed RNA polymerase subunit omega.